A 532-amino-acid polypeptide reads, in one-letter code: Cocaine esterase (532 aa).

The residue at position 1 (Q1) is a Pyrrolidone carboxylic acid. C69 and C96 are joined by a disulfide. The active-site Acyl-ester intermediate is the S201. N249 is a glycosylation site (N-linked (GlcNAc...) asparagine). C253 and C264 form a disulfide bridge. Catalysis depends on charge relay system residues E318 and H430. The Prevents secretion from ER signature appears at 529-532 (HTEL).

The protein belongs to the type-B carboxylesterase/lipase family. Monomer.

It localises to the endoplasmic reticulum lumen. It catalyses the reaction a carboxylic ester + H2O = an alcohol + a carboxylate + H(+). It carries out the reaction cocaine + H2O = ecgonine methyl ester + benzoate + H(+). The catalysed reaction is 2-(5Z,8Z,11Z,14Z-eicosatetraenoyl)-glycerol + H2O = glycerol + (5Z,8Z,11Z,14Z)-eicosatetraenoate + H(+). The enzyme catalyses prostaglandin E2 1-glyceryl ester + H2O = prostaglandin E2 + glycerol + H(+). It catalyses the reaction prostaglandin F2alpha 1-glyceryl ester + H2O = prostaglandin F2alpha + glycerol + H(+). In terms of biological role, involved in the detoxification of xenobiotics and in the activation of ester and amide prodrugs. Converts monoacylglycerides to free fatty acids and glycerol. Hydrolyzes of 2-arachidonoylglycerol and prostaglandins. In Oryctolagus cuniculus (Rabbit), this protein is Cocaine esterase (CES2).